The primary structure comprises 296 residues: 4-hydroxy-tetrahydrodipicolinate synthase (296 aa).

Thr-49 contacts pyruvate. Tyr-137 serves as the catalytic Proton donor/acceptor. Lys-166 serves as the catalytic Schiff-base intermediate with substrate. Ile-208 provides a ligand contact to pyruvate.

Belongs to the DapA family. As to quaternary structure, homotetramer; dimer of dimers.

It localises to the cytoplasm. The catalysed reaction is L-aspartate 4-semialdehyde + pyruvate = (2S,4S)-4-hydroxy-2,3,4,5-tetrahydrodipicolinate + H2O + H(+). It participates in amino-acid biosynthesis; L-lysine biosynthesis via DAP pathway; (S)-tetrahydrodipicolinate from L-aspartate: step 3/4. In terms of biological role, catalyzes the condensation of (S)-aspartate-beta-semialdehyde [(S)-ASA] and pyruvate to 4-hydroxy-tetrahydrodipicolinate (HTPA). The protein is 4-hydroxy-tetrahydrodipicolinate synthase of Chlorobium luteolum (strain DSM 273 / BCRC 81028 / 2530) (Pelodictyon luteolum).